A 432-amino-acid chain; its full sequence is Adenylosuccinate synthetase (432 aa).

Residues 13-19 (GDEGKGK) and 41-43 (GHT) each bind GTP. Residue Asp14 is the Proton acceptor of the active site. Residues Asp14 and Gly41 each coordinate Mg(2+). IMP-binding positions include 14–17 (DEGK), 39–42 (NAGH), Thr130, Arg144, Gln225, Thr240, and Arg304. His42 acts as the Proton donor in catalysis. 300–306 (ATTGRRR) contacts substrate. GTP-binding positions include Arg306, 332–334 (KLD), and 415–417 (STG).

The protein belongs to the adenylosuccinate synthetase family. As to quaternary structure, homodimer. Mg(2+) is required as a cofactor.

The protein resides in the cytoplasm. It catalyses the reaction IMP + L-aspartate + GTP = N(6)-(1,2-dicarboxyethyl)-AMP + GDP + phosphate + 2 H(+). Its pathway is purine metabolism; AMP biosynthesis via de novo pathway; AMP from IMP: step 1/2. In terms of biological role, plays an important role in the de novo pathway of purine nucleotide biosynthesis. Catalyzes the first committed step in the biosynthesis of AMP from IMP. The protein is Adenylosuccinate synthetase of Pectobacterium carotovorum subsp. carotovorum (strain PC1).